We begin with the raw amino-acid sequence, 432 residues long: Acetylserotonin O-methyltransferase (432 aa).

S-adenosyl-L-methionine-binding positions include tyrosine 146, tryptophan 163, aspartate 209, 235-237 (GDF), and arginine 252. The Proton donor/acceptor role is filled by histidine 255. Aspartate 256, asparagine 302, and glutamine 306 together coordinate substrate. The interval 373–432 (VPGARSDAAGTGSGTGNTGSGIMLQGETLESEVSAPQAGSDVGGAGNEPRSGTLKQGDWK) is disordered.

It belongs to the class I-like SAM-binding methyltransferase superfamily. Cation-independent O-methyltransferase family. As to quaternary structure, homodimer. In terms of tissue distribution, expressed predominantly in the pineal gland (at protein level). Very low expression, if any, in the retina.

It carries out the reaction N-acetylserotonin + S-adenosyl-L-methionine = melatonin + S-adenosyl-L-homocysteine + H(+). It participates in aromatic compound metabolism; melatonin biosynthesis; melatonin from serotonin: step 1/2. Catalyzes the transfer of a methyl group onto N-acetylserotonin, producing melatonin (N-acetyl-5-methoxytryptamine). This is Acetylserotonin O-methyltransferase (Asmt) from Rattus norvegicus (Rat).